A 498-amino-acid chain; its full sequence is MMLSSTSLYAAIDLGSNSFHMLVVREVAGSIQTLARIKRKVRLAAGLDTQNHLSQEAMERGWQCLKLFSERLQDIPLDQIRVVATATLRLASNAEEFLQTATEILGCPIQVISGEEEARLIYHGVAHTTGGPEQRLVVDIGGGSTELVTGNGAQANILVSLPMGCVTWLERYFSDRNLAKDNFDRSESAAREMLKPVAQRFREHGWQICVGASGTVQALQEIMVAQGMDELITLAKLQQLKQRAIQCGKLEELEIPGLTLERALVFPSGLSILIAIFQELAIESMTLAGGALREGLVYGMLHLPVEQDIRSRTVRNIQRRYLLDTEQAKRVSKLADNFLLQVEKEWRLDSRCRELLQNACLIHEIGLSIDFKRAPQHAAYLIRNLDLPGFTPAQKLLLAALLQNQSDTLDLSLLNQQNALPVDMAQHLCRLLRLAIIFSSRRRDDTLPAVRLRANGETLYVLLPHGWLQQHPYRAEALEQESHWQSYVQWPLLLEEFN.

The protein belongs to the GppA/Ppx family. GppA subfamily.

It catalyses the reaction guanosine 3'-diphosphate 5'-triphosphate + H2O = guanosine 3',5'-bis(diphosphate) + phosphate + H(+). The protein operates within purine metabolism; ppGpp biosynthesis; ppGpp from GTP: step 2/2. Its function is as follows. Catalyzes the conversion of pppGpp to ppGpp. Guanosine pentaphosphate (pppGpp) is a cytoplasmic signaling molecule which together with ppGpp controls the 'stringent response', an adaptive process that allows bacteria to respond to amino acid starvation, resulting in the coordinated regulation of numerous cellular activities. In Yersinia enterocolitica serotype O:8 / biotype 1B (strain NCTC 13174 / 8081), this protein is Guanosine-5'-triphosphate,3'-diphosphate pyrophosphatase.